An 88-amino-acid polypeptide reads, in one-letter code: Phosphocarrier protein HPr (88 aa).

The 88-residue stretch at 1–88 folds into the HPr domain; that stretch reads MEQKSYVIID…DILSKEGLTK (88 aa). His15 (pros-phosphohistidine intermediate) is an active-site residue. Ser46 carries the phosphoserine; by HPrK/P modification.

The protein belongs to the HPr family.

Its subcellular location is the cytoplasm. Its activity is regulated as follows. Phosphorylation on Ser-46 inhibits the phosphoryl transfer from enzyme I to HPr. General (non sugar-specific) component of the phosphoenolpyruvate-dependent sugar phosphotransferase system (sugar PTS). This major carbohydrate active-transport system catalyzes the phosphorylation of incoming sugar substrates concomitantly with their translocation across the cell membrane. The phosphoryl group from phosphoenolpyruvate (PEP) is transferred to the phosphoryl carrier protein HPr by enzyme I. Phospho-HPr then transfers it to the PTS EIIA domain. The chain is Phosphocarrier protein HPr (ptsH) from Staphylococcus xylosus.